The sequence spans 90 residues: MALMDFFKKKASGSVAKDRLKLVLVSDRAGCSPEIMEQIKNDIIAVISKYIVIDQEGLDIKITQTESEGNNGNVPALFANIPIKDLKHSK.

Belongs to the MinE family.

In terms of biological role, prevents the cell division inhibition by proteins MinC and MinD at internal division sites while permitting inhibition at polar sites. This ensures cell division at the proper site by restricting the formation of a division septum at the midpoint of the long axis of the cell. The protein is Cell division topological specificity factor of Lachnoclostridium phytofermentans (strain ATCC 700394 / DSM 18823 / ISDg) (Clostridium phytofermentans).